We begin with the raw amino-acid sequence, 236 residues long: 15,16-dihydrobiliverdin:ferredoxin oxidoreductase (236 aa).

The protein belongs to the HY2 family.

The catalysed reaction is 15,16-dihydrobiliverdin + oxidized 2[4Fe-4S]-[ferredoxin] = biliverdin IXalpha + reduced 2[4Fe-4S]-[ferredoxin] + 2 H(+). Catalyzes the two-electron reduction of biliverdin IX-alpha at the C15 methine bridge. This chain is 15,16-dihydrobiliverdin:ferredoxin oxidoreductase, found in Prochlorococcus marinus (strain AS9601).